The chain runs to 100 residues: NADH-quinone oxidoreductase subunit K (100 aa).

The next 3 helical transmembrane spans lie at 4–24, 28–48, and 60–80; these read LQHGLILSAILFVLGLTGLVI, LLFMLIGLEIMINASALAFVV, and VMYILAISLAAAEASIGLALL.

Belongs to the complex I subunit 4L family. In terms of assembly, NDH-1 is composed of 13 different subunits. Subunits NuoA, H, J, K, L, M, N constitute the membrane sector of the complex.

It is found in the cell inner membrane. The enzyme catalyses a quinone + NADH + 5 H(+)(in) = a quinol + NAD(+) + 4 H(+)(out). Its function is as follows. NDH-1 shuttles electrons from NADH, via FMN and iron-sulfur (Fe-S) centers, to quinones in the respiratory chain. The immediate electron acceptor for the enzyme in this species is believed to be ubiquinone. Couples the redox reaction to proton translocation (for every two electrons transferred, four hydrogen ions are translocated across the cytoplasmic membrane), and thus conserves the redox energy in a proton gradient. The polypeptide is NADH-quinone oxidoreductase subunit K (Shigella boydii serotype 18 (strain CDC 3083-94 / BS512)).